The primary structure comprises 665 residues: E3 ubiquitin-protein ligase cblA (665 aa).

A disordered region spans residues 30–50 (NNNNNINNNNNNNNINSNNNG). The 4H stretch occupies residues 109-231 (TSLVNYIHYE…NNENNNNNNN (123 aa)). The Cbl-PTB domain occupies 109–400 (TSLVNYIHYE…PDIFKSILSF (292 aa)). Positions 232 to 306 (NYNPYELLSN…FKLSVFIKWF (75 aa)) are EF-hand-like. Positions 287, 289, 291, and 293 each coordinate Ca(2+). An SH2-like region spans residues 307 to 400 (GALPVSLGIF…PDIFKSILSF (94 aa)). Disordered regions lie at residues 437-456 (ENNN…INTF) and 467-609 (DSSN…NNNN). Residues 467–478 (DSSNSSDTNKSP) show a composition bias toward low complexity. The stretch at 479 to 544 (TKSRKSSFKN…NNNNNNNNNN (66 aa)) forms a coiled coil. The segment covering 486–512 (FKNDKDKKEKEKEKGKDKEKEKERVSD) has biased composition (basic and acidic residues). 2 stretches are compositionally biased toward low complexity: residues 530 to 561 (NNNN…NNNN) and 571 to 609 (TSNG…NNNN). Residues 618–653 (CTVCMDNEINTVFLECGHLSCCSLCSVKLKKCPICR) form an RING-type zinc finger.

Post-translationally, ubiquitinated.

Its subcellular location is the cytoplasm. It localises to the nucleus. The catalysed reaction is S-ubiquitinyl-[E2 ubiquitin-conjugating enzyme]-L-cysteine + [acceptor protein]-L-lysine = [E2 ubiquitin-conjugating enzyme]-L-cysteine + N(6)-ubiquitinyl-[acceptor protein]-L-lysine.. It functions in the pathway protein modification; protein ubiquitination. Functionally, acts as an E3 ubiquitin-protein ligase, which accepts ubiquitin from specific E2 ubiquitin-conjugating enzymes, and then transfers it to substrates promoting their degradation by the proteasome. Up-regulates STATc tyrosine phosphorylation via an inhibitory effect on ptpC accumulation. Recognizes activated receptor tyrosine kinases, RTKs and terminates signaling. This is E3 ubiquitin-protein ligase cblA (cblA-1) from Dictyostelium discoideum (Social amoeba).